The primary structure comprises 398 residues: tRNA-specific 2-thiouridylase MnmA (398 aa).

ATP is bound by residues 20 to 27 (AMSGGVDS) and Leu46. The active-site Nucleophile is Cys114. Residues Cys114 and Cys210 are joined by a disulfide bond. ATP is bound at residue Gly138. Positions 160–162 (RDQ) are interaction with tRNA. Catalysis depends on Cys210, which acts as the Cysteine persulfide intermediate.

This sequence belongs to the MnmA/TRMU family.

The protein localises to the cytoplasm. The catalysed reaction is S-sulfanyl-L-cysteinyl-[protein] + uridine(34) in tRNA + AH2 + ATP = 2-thiouridine(34) in tRNA + L-cysteinyl-[protein] + A + AMP + diphosphate + H(+). In terms of biological role, catalyzes the 2-thiolation of uridine at the wobble position (U34) of tRNA, leading to the formation of s(2)U34. The chain is tRNA-specific 2-thiouridylase MnmA from Brucella canis (strain ATCC 23365 / NCTC 10854 / RM-666).